Here is a 591-residue protein sequence, read N- to C-terminus: L-fucose isomerase (591 aa).

Residues E337 and D361 each act as proton acceptor in the active site. 3 residues coordinate Mn(2+): E337, D361, and H528.

Belongs to the L-fucose isomerase family. Homohexamer. The cofactor is Mn(2+).

The protein resides in the cytoplasm. It catalyses the reaction L-fucose = L-fuculose. It participates in carbohydrate degradation; L-fucose degradation; L-lactaldehyde and glycerone phosphate from L-fucose: step 1/3. In terms of biological role, converts the aldose L-fucose into the corresponding ketose L-fuculose. The sequence is that of L-fucose isomerase from Escherichia coli O6:H1 (strain CFT073 / ATCC 700928 / UPEC).